A 273-amino-acid polypeptide reads, in one-letter code: Large ribosomal subunit protein uL2 (273 aa).

Positions alanine 224 to threonine 263 are disordered. The segment covering lysine 253 to threonine 263 has biased composition (basic residues).

This sequence belongs to the universal ribosomal protein uL2 family. Part of the 50S ribosomal subunit. Forms a bridge to the 30S subunit in the 70S ribosome.

Its function is as follows. One of the primary rRNA binding proteins. Required for association of the 30S and 50S subunits to form the 70S ribosome, for tRNA binding and peptide bond formation. It has been suggested to have peptidyltransferase activity; this is somewhat controversial. Makes several contacts with the 16S rRNA in the 70S ribosome. The sequence is that of Large ribosomal subunit protein uL2 from Buchnera aphidicola subsp. Schizaphis graminum (strain Sg).